Consider the following 1163-residue polypeptide: MDRNREAEMELRRGPSPTRAGRGHEVDGDKATCHTCCICGKSFPFQSSLSQHMRKHTGEKPYKCPYCDHRASQKGNLKIHIRSHRTGTLIQGHEPEAGEAPLGEMRASEGLDACASPTKSASACNRLLNGASQADGARVLNGASQADSGRVLLRSSKKGAEGSACAPGEAKAAVQCSFCKSQFERKKDLELHVHQAHKPFKCRLCSYATLREESLLSHIERDHITAQGPGSGEACVENGKPELSPGEFPCEVCGQAFSQTWFLKAHMKKHRGSFDHGCHICGRRFKEPWFLKNHMKAHGPKTGSKNRPKSELDPIATINNVVQEEVIVAGLSLYEVCAKCGNLFTNLDSLNAHNAIHRRVEASRTRAPAEEGAEGPSDTKQFFLQCLNLRPSAAGDSCPGTQAGRRVAELDPVNSYQAWQLATRGKVAEPAEYLKYGAWDEALAGDVAFDKDRREYVLVSQEKRKREQDAPAAQGPPRKRASGPGDPAPAGHLDPRSAARPNRRAAATTGQGKSSECFECGKIFRTYHQMVLHSRVHRRARRERDSDGDRAARARCGSLSEGDSASQPSSPGSACAAADSPGSGLADEAAEDSGEEGAPEPAPGGQPRRCCFSEEVTSTELSSGDQSHKMGDNASERDTGESKAGIAASVSILENSSRETSRRQEQHRFSMDLKMPAFHPKQEVPVPGDGVEFPSSTGAEGQTGHPAEKLSDLHNKEHSGGGKRALAPDLMPLDLSARSTRDDPSNKETASSLQAALVVHPCPYCSHKTYYPEVLWMHKRIWHRVSCNSVAPPWIQPNGYKSIRSNLVFLSRSGRTGPPPALGGKECQPLLLARFTRTQVPGGMPGSKSGSSPLGVVTKAASMPKNKESHSGGPCALWAPGPDGYRQTKPCHGQEPHGAATQGPLAKPRQEASSKPVPAPGGGGFSRSATPTPTVIARAGAQPSANSKPVEKFGVPPAGAGFAPTNKHSAPDSLKAKFSAQPQGPPPAKGEGGAPPLPPREPPSKAAQELRTLATCAAGSRGDAALQAQPGVAGAPPVLHSIKQEPVAEGHEKRLDILNIFKTYIPKDFATLYQGWGVSGPGLEHRGTLRTQARPGEFVCIECGKSFHQPGHLRAHMRAHSVVFESDGPRGSEVHTTSADAPKQGRDHSNTGTVQTVPLRKGT.

Basic and acidic residues predominate over residues 1 to 13 (MDRNREAEMELRR). Positions 1–26 (MDRNREAEMELRRGPSPTRAGRGHEV) are disordered. Residues 1 to 431 (MDRNREAEME…ATRGKVAEPA (431 aa)) are mediates promoter DNA-binding and activation of transcription. C2H2-type zinc fingers lie at residues 34–56 (HTCCICGKSFPFQSSLSQHMRKH), 62–84 (YKCPYCDHRASQKGNLKIHIRSH), 174–197 (VQCSFCKSQFERKKDLELHVHQAH), 200–223 (FKCRLCSYATLREESLLSHIERDH), 248–270 (FPCEVCGQAFSQTWFLKAHMKKH), 276–298 (HGCHICGRRFKEPWFLKNHMKAH), and 335–357 (EVCAKCGNLFTNLDSLNAHNAIH). Positions 460-469 (SQEKRKREQD) are enriched in basic and acidic residues. Disordered regions lie at residues 460 to 512 (SQEK…TGQG), 533 to 667 (HSRV…QEQH), and 679 to 730 (HPKQ…APDL). Residues 496–507 (RSAARPNRRAAA) show a composition bias toward low complexity. Residues 515–537 (SECFECGKIFRTYHQMVLHSRVH) form a C2H2-type 8 zinc finger. Basic and acidic residues predominate over residues 542-552 (RERDSDGDRAA). A compositionally biased stretch (polar residues) spans 561-572 (EGDSASQPSSPG). The span at 588–598 (EAAEDSGEEGA) shows a compositional bias: acidic residues. Residues 615 to 625 (EVTSTELSSGD) are compositionally biased toward polar residues. A compositionally biased stretch (basic and acidic residues) spans 626–641 (QSHKMGDNASERDTGE). Residue K643 forms a Glycyl lysine isopeptide (Lys-Gly) (interchain with G-Cter in SUMO2) linkage. A compositionally biased stretch (basic and acidic residues) spans 656 to 667 (SSRETSRRQEQH). K681 participates in a covalent cross-link: Glycyl lysine isopeptide (Lys-Gly) (interchain with G-Cter in SUMO2). The span at 706–720 (PAEKLSDLHNKEHSG) shows a compositional bias: basic and acidic residues. Residues 760-783 (HPCPYCSHKTYYPEVLWMHKRIWH) form a C2H2-type 9; atypical zinc finger. The segment at 838 to 1007 (TQVPGGMPGS…PPREPPSKAA (170 aa)) is disordered. A compositionally biased stretch (low complexity) spans 840 to 857 (VPGGMPGSKSGSSPLGVV). Residues K1043 and K1062 each participate in a glycyl lysine isopeptide (Lys-Gly) (interchain with G-Cter in SUMO2) cross-link. The C2H2-type 10 zinc-finger motif lies at 1098–1120 (FVCIECGKSFHQPGHLRAHMRAH). The tract at residues 1126-1163 (SDGPRGSEVHTTSADAPKQGRDHSNTGTVQTVPLRKGT) is disordered.

Belongs to the krueppel C2H2-type zinc-finger protein family. Interacts with PRDM16; the interaction is direct and may play a role in the transcription of brown adipose tissue-specific genes. Interacts with PWWP2B. Interacts with HDAC1; this interaction is enhanced in the presence of PWWP2B.

It is found in the nucleus. Its function is as follows. Transcriptional regulator that binds to the promoter and activates the transcription of genes promoting brown adipose tissue (BAT) differentiation. Among brown adipose tissue-specific genes, binds the proximal region of the promoter of the UCP1 gene to activate its transcription and thereby regulate thermogenesis. May also play a role in the cellular response to replication stress. This Homo sapiens (Human) protein is Zinc finger protein 516.